A 102-amino-acid polypeptide reads, in one-letter code: Ribosomal silencing factor RsfS (102 aa).

The protein belongs to the Iojap/RsfS family. As to quaternary structure, interacts with ribosomal protein uL14 (rplN).

Its subcellular location is the cytoplasm. In terms of biological role, functions as a ribosomal silencing factor. Interacts with ribosomal protein uL14 (rplN), blocking formation of intersubunit bridge B8. Prevents association of the 30S and 50S ribosomal subunits and the formation of functional ribosomes, thus repressing translation. The protein is Ribosomal silencing factor RsfS of Haemophilus influenzae (strain ATCC 51907 / DSM 11121 / KW20 / Rd).